An 821-amino-acid chain; its full sequence is KN motif and ankyrin repeat domain-containing protein 3 (821 aa).

Polar residues predominate over residues 1–10 (MAKFALNQNL). Disordered stretches follow at residues 1–36 (MAKF…PYSV), 58–184 (GPAA…AQLQ), 224–333 (LLAG…APET), and 385–547 (AAEE…GRCE). A compositionally biased stretch (low complexity) spans 77 to 88 (RPGLAGARSPGA). The segment covering 128–150 (PRVEHTLRETSRRLELAQTHERA) has biased composition (basic and acidic residues). Low complexity predominate over residues 151 to 181 (PSPGRGVPRSPRGSGRSSPAPNLAPASPGPA). Phosphoserine occurs at positions 152, 160, 164, 167, 168, and 177. Residues 181–230 (AQLQLVREQMAAALRRLRELEDQARTLPELQEQVRALRAEKARLLAGRAQ) adopt a coiled-coil conformation. The segment covering 237 to 261 (AETRPDKLAQLRRLTERLATSERGG) has biased composition (basic and acidic residues). Residues serine 271, serine 280, and serine 293 each carry the phosphoserine modification. A coiled-coil region spans residues 367–404 (GVSELLRGRLRELEEAREAAEEAAAGARAQLREATTQT). 2 stretches are compositionally biased toward low complexity: residues 388-400 (EAAA…LREA) and 494-507 (NGGA…SGSG). ANK repeat units lie at residues 622 to 652 (NGNT…EVNR), 656 to 690 (AGYS…DVNA), 695 to 724 (TGQT…DVNA), 728 to 758 (DGAT…DPAI), and 762 to 785 (EGTS…LHAH). The tract at residues 784-821 (AHLSSGQPDTQSESPPGSQTATPGEGECGDNGENPQVQ) is disordered. The segment covering 787 to 805 (SSGQPDTQSESPPGSQTAT) has biased composition (polar residues).

Strongly expressed in breast, liver, lung, skeletal muscle and kidney.

May be involved in the control of cytoskeleton formation by regulating actin polymerization. This chain is KN motif and ankyrin repeat domain-containing protein 3, found in Homo sapiens (Human).